Reading from the N-terminus, the 388-residue chain is Succinate--CoA ligase [ADP-forming] subunit beta (388 aa).

The region spanning 9 to 244 (KELFARRGLP…VTQEDAREAH (236 aa)) is the ATP-grasp domain. Residues Lys46, 53–55 (GRG), Glu99, Thr102, and Glu107 contribute to the ATP site. 2 residues coordinate Mg(2+): Asn199 and Asp213. Substrate contacts are provided by residues Asn264 and 321-323 (GIV).

This sequence belongs to the succinate/malate CoA ligase beta subunit family. Heterotetramer of two alpha and two beta subunits. Requires Mg(2+) as cofactor.

The enzyme catalyses succinate + ATP + CoA = succinyl-CoA + ADP + phosphate. It catalyses the reaction GTP + succinate + CoA = succinyl-CoA + GDP + phosphate. It participates in carbohydrate metabolism; tricarboxylic acid cycle; succinate from succinyl-CoA (ligase route): step 1/1. Its function is as follows. Succinyl-CoA synthetase functions in the citric acid cycle (TCA), coupling the hydrolysis of succinyl-CoA to the synthesis of either ATP or GTP and thus represents the only step of substrate-level phosphorylation in the TCA. The beta subunit provides nucleotide specificity of the enzyme and binds the substrate succinate, while the binding sites for coenzyme A and phosphate are found in the alpha subunit. The chain is Succinate--CoA ligase [ADP-forming] subunit beta from Hamiltonella defensa subsp. Acyrthosiphon pisum (strain 5AT).